The sequence spans 203 residues: Nascent polypeptide-associated complex subunit alpha (203 aa).

Residues 1–19 (MADPRIEELPDEEVPKTNV) show a composition bias toward basic and acidic residues. A disordered region spans residues 1–45 (MADPRIEELPDEEVPKTNVEDAADSSESEAGEEPTIPGGAAVTIH). Residues 21 to 32 (DAADSSESEAGE) are compositionally biased toward acidic residues. The region spanning 46 to 111 (SRNEKKARKA…AKIEDLNSQA (66 aa)) is the NAC-A/B domain. The tract at residues 118 to 167 (QLAAAEAAGEHAGHDHDHDKGKGKAPETEAKKEEEEDDGEEVDETGLEPK) is disordered. Residues 125-150 (AGEHAGHDHDHDKGKGKAPETEAKKE) show a composition bias toward basic and acidic residues. Over residues 151-163 (EEEDDGEEVDETG) the composition is skewed to acidic residues. Residues 164-203 (LEPKDIDLVMAQANVSRKKAVKALRENDNDIVNSIMALSI) form the UBA domain.

It belongs to the NAC-alpha family. Part of the nascent polypeptide-associated complex (NAC), consisting of egd2 and egd1. NAC associates with ribosomes via egd1.

The protein localises to the cytoplasm. The protein resides in the nucleus. Component of the nascent polypeptide-associated complex (NAC), a dynamic component of the ribosomal exit tunnel, protecting the emerging polypeptides from interaction with other cytoplasmic proteins to ensure appropriate nascent protein targeting. The NAC complex also promotes mitochondrial protein import by enhancing productive ribosome interactions with the outer mitochondrial membrane and blocks the inappropriate interaction of ribosomes translating non-secretory nascent polypeptides with translocation sites in the membrane of the endoplasmic reticulum. Egd2 may also be involved in transcription regulation. This Emericella nidulans (strain FGSC A4 / ATCC 38163 / CBS 112.46 / NRRL 194 / M139) (Aspergillus nidulans) protein is Nascent polypeptide-associated complex subunit alpha (egd2).